Reading from the N-terminus, the 241-residue chain is MPASIPRRNIVGKEKKSRILTKPCVIEYEGQIVGYGSKELRVETISCWLARTIIQTKHYSRRFVNNSYLHLGVFSGRDLVGVLQWGYALNPNSGRRVVLETDNRGYMELNRMWLHDDMPRNSESRAISYALKVIRLLYPSVEWVQSFADERCGRAGVVYQASNFDFIGSHESTFYELDGEWYHEITMNAIKRGGQRGVYLRANKERAVVHKFNQYRYIRFLNKRARKRLNTKLFKVQPYPK.

Residues Tyr-59, Asp-149, and Tyr-159 each coordinate Fe cation.

Belongs to the mulikevirus mom protein family. The cofactor is Fe(2+). Fe(3+) serves as cofactor.

It is found in the host cytoplasm. The catalysed reaction is a 2'-deoxyadenosine in DNA + acetyl-CoA + AH2 + NH4(+) + O2 = a N(6)-methylcarbamoyl-2'-deoxyadenosine in DNA + A + CoA + 2 H2O + H(+). In terms of biological role, iron-binding protein that performs methylcarbamoylation of adenine using acetyl CoA. This chemical modificaltion makes the viral DNA resistant to a variety of host type I and type II restriction enzymes by modifying approximately 15% of DNA adenine residues. The modification called momylation changes adenine for N6-methylcarbamoyl adenine and occurs just before packaging. Target sequences are 5'-(C or G)-A-(Cor G)-N-(C or T)-3'. Also usually modifies adenine residues in the host cellular DNA. The protein is Methylcarbamoylase mom (mom) of Escherichia phage Mu (Bacteriophage Mu).